Here is a 222-residue protein sequence, read N- to C-terminus: Physcion biosynthesis cluster O-methyltransferase (222 aa).

The protein belongs to the methyltransferase superfamily.

The catalysed reaction is emodin + S-adenosyl-L-methionine = physcion + S-adenosyl-L-homocysteine. It participates in secondary metabolite biosynthesis. In terms of biological role, O-methyltransferase; part of the gene cluster that mediates the biosynthesis of physcion, a natural anthraquinone fungicide that can prevent plant fungal infections. Within the pathway, the O-methyltransferase AcOMT catalyzes the last step by transferring a methyl group to C-6 hydroxyl of emodin to form physcion. AcOMT may also methylate the C-6 hydroxyl group of emodin anthrone to produce physcion-anthrone B. The pathway begins with the polyketide synthase AcPKS that condenses 8 malonyl-CoA units to synthesize atrochrysone thioester which is released from the synthase by the atrochrysone carboxyl ACP thioesterase AcTE that breaks the thioester bond and leads to free atrochrysone carboxylic acid. Spontaneous decarboxylation of atrochrysone carboxylic acid leads to the formation of atrochrysone. Then, atrochrysone undergoes spontaneous dehydration and oxidation, giving the products emodin anthrone and emodin. The O-methyltransferase AcOMT then methylates the C-6 hydroxyl of emodin to form physcion. The polypeptide is Physcion biosynthesis cluster O-methyltransferase (Aspergillus chevalieri (Eurotium chevalieri)).